A 284-amino-acid chain; its full sequence is Shikimate dehydrogenase (NADP(+)) (284 aa).

Shikimate is bound by residues 20-22 and serine 67; that span reads SIS. Catalysis depends on lysine 71, which acts as the Proton acceptor. Residue aspartate 83 coordinates NADP(+). Residues asparagine 92 and aspartate 107 each coordinate shikimate. Residues 129–133 and isoleucine 227 each bind NADP(+); that span reads GAGGA. Residue tyrosine 229 coordinates shikimate. Glycine 250 provides a ligand contact to NADP(+).

The protein belongs to the shikimate dehydrogenase family. Homodimer.

The enzyme catalyses shikimate + NADP(+) = 3-dehydroshikimate + NADPH + H(+). It functions in the pathway metabolic intermediate biosynthesis; chorismate biosynthesis; chorismate from D-erythrose 4-phosphate and phosphoenolpyruvate: step 4/7. In terms of biological role, involved in the biosynthesis of the chorismate, which leads to the biosynthesis of aromatic amino acids. Catalyzes the reversible NADPH linked reduction of 3-dehydroshikimate (DHSA) to yield shikimate (SA). The sequence is that of Shikimate dehydrogenase (NADP(+)) from Streptococcus pneumoniae (strain JJA).